A 32-amino-acid chain; its full sequence is Calcitonin (32 aa).

C1 and C7 are joined by a disulfide. P32 is modified (proline amide).

The protein belongs to the calcitonin family.

Its subcellular location is the secreted. Causes a rapid but short-lived drop in the level of calcium and phosphate in blood by promoting the incorporation of those ions in the bones. This is Calcitonin from Anguilla japonica (Japanese eel).